Reading from the N-terminus, the 423-residue chain is Serine--tRNA ligase (423 aa).

230-232 serves as a coordination point for L-serine; the sequence is TSE. 261–263 provides a ligand contact to ATP; sequence RSE. Glutamate 284 provides a ligand contact to L-serine. Position 348-351 (348-351) interacts with ATP; it reads EISS. Serine 384 serves as a coordination point for L-serine.

This sequence belongs to the class-II aminoacyl-tRNA synthetase family. Type-1 seryl-tRNA synthetase subfamily. As to quaternary structure, homodimer. The tRNA molecule binds across the dimer.

The protein localises to the cytoplasm. The enzyme catalyses tRNA(Ser) + L-serine + ATP = L-seryl-tRNA(Ser) + AMP + diphosphate + H(+). It carries out the reaction tRNA(Sec) + L-serine + ATP = L-seryl-tRNA(Sec) + AMP + diphosphate + H(+). Its pathway is aminoacyl-tRNA biosynthesis; selenocysteinyl-tRNA(Sec) biosynthesis; L-seryl-tRNA(Sec) from L-serine and tRNA(Sec): step 1/1. Catalyzes the attachment of serine to tRNA(Ser). Is also able to aminoacylate tRNA(Sec) with serine, to form the misacylated tRNA L-seryl-tRNA(Sec), which will be further converted into selenocysteinyl-tRNA(Sec). This chain is Serine--tRNA ligase, found in Macrococcus caseolyticus (strain JCSC5402) (Macrococcoides caseolyticum).